The chain runs to 176 residues: Probable DNA-directed RNA polymerase subunit delta (176 aa).

The HTH HARE-type domain occupies Leu-14–Trp-81. Disordered regions lie at residues Val-91–Asp-119 and Asp-140–Lys-176. Composition is skewed to acidic residues over residues Asp-105 to Asp-119 and Thr-159 to Lys-176.

The protein belongs to the RpoE family. As to quaternary structure, RNAP is composed of a core of 2 alpha, a beta and a beta' subunits. The core is associated with a delta subunit and one of several sigma factors.

In terms of biological role, participates in both the initiation and recycling phases of transcription. In the presence of the delta subunit, RNAP displays an increased specificity of transcription, a decreased affinity for nucleic acids, and an increased efficiency of RNA synthesis because of enhanced recycling. The protein is Probable DNA-directed RNA polymerase subunit delta of Listeria welshimeri serovar 6b (strain ATCC 35897 / DSM 20650 / CCUG 15529 / CIP 8149 / NCTC 11857 / SLCC 5334 / V8).